The following is a 349-amino-acid chain: Galactose-1-phosphate uridylyltransferase (349 aa).

Arginine 29–arginine 32 serves as a coordination point for UDP-alpha-D-glucose. Residues cysteine 53 and cysteine 56 each coordinate Zn(2+). Asparagine 78–aspartate 79 is a UDP-alpha-D-glucose binding site. Histidine 116 provides a ligand contact to Zn(2+). UDP-alpha-D-glucose is bound by residues asparagine 154 and glycine 160–serine 162. Histidine 165 contacts Zn(2+). Catalysis depends on histidine 167, which acts as the Tele-UMP-histidine intermediate. Glutamine 169 serves as a coordination point for UDP-alpha-D-glucose. Fe cation is bound by residues glutamate 183, histidine 282, histidine 297, and histidine 299. UDP-alpha-D-glucose-binding positions include lysine 312–phenylalanine 313, tyrosine 317–glutamate 318, and glutamine 324.

This sequence belongs to the galactose-1-phosphate uridylyltransferase type 1 family. It depends on Zn(2+) as a cofactor.

The enzyme catalyses alpha-D-galactose 1-phosphate + UDP-alpha-D-glucose = alpha-D-glucose 1-phosphate + UDP-alpha-D-galactose. It participates in carbohydrate metabolism; galactose metabolism. The chain is Galactose-1-phosphate uridylyltransferase (galT) from Haemophilus influenzae (strain ATCC 51907 / DSM 11121 / KW20 / Rd).